The chain runs to 1330 residues: Kinectin (1330 aa).

Residues 1–6 are Cytoplasmic-facing; that stretch reads MEFYES. A helical; Signal-anchor for type II membrane protein transmembrane segment spans residues 7–29; it reads TYFIVLIPSVVITVIFLFFWLFM. At 30–1330 the chain is on the lumenal side; it reads KETLYDEVLA…KEKEHYQVLE (1301 aa). 2 disordered regions span residues 49–81 and 108–218; these read PTKT…ESVP and SSSV…KQKA. A phosphoserine mark is found at Ser-75 and Ser-77. Positions 113 to 122 are enriched in basic residues; that stretch reads ERKKKEKKHK. Over residues 123–135 the composition is skewed to basic and acidic residues; the sequence is PVLEEQVTKESDV. Thr-153 carries the post-translational modification Phosphothreonine. A Phosphoserine modification is found at Ser-156. Over residues 161-171 the composition is skewed to basic residues; it reads SKKKPGQKKSK. 5 N-linked (GlcNAc...) asparagine glycosylation sites follow: Asn-172, Asn-435, Asn-772, Asn-904, and Asn-1055. Residues 172–182 show a composition bias toward basic and acidic residues; the sequence is NGSDDQDKKVE. A coiled-coil region spans residues 332-1329; sequence HQLQEKDKLL…TKEKEHYQVL (998 aa). Phosphoserine is present on Ser-1085. Asn-1236 is a glycosylation site (N-linked (GlcNAc...) asparagine). Ser-1286 is modified (phosphoserine). A glycan (N-linked (GlcNAc...) asparagine) is linked at Asn-1302.

The protein belongs to the kinectin family. In terms of assembly, parallel homodimers formed between the membrane-bound and the cytosolic form, and also between 2 cytosolic forms. In terms of tissue distribution, expressed in male brain, heart, kidney, liver, lung, spleen and testis.

It is found in the endoplasmic reticulum membrane. Its function is as follows. Receptor for kinesin thus involved in kinesin-driven vesicle motility. In Vulpes vulpes (Red fox), this protein is Kinectin (KTN1).